The primary structure comprises 518 residues: MAPKISISLNPPYNGEFYSSNDQMSGIVSLQLTKALSIRKISVILKGFSETLTKIDQEYMFQQNGMMMPGQDNKSFHTLMKFEQRVFPPDNVWNALDGSSKPFKVKPGSYNYSFQFDKFPRKPECLKNHTAKTVAFVTRSNARLPPTFNSHWQEFNKIDNLDLYFYSFGKVIYMVQVQIELGKSSSWFKPFHKLIREIETFEFIPEPKDLIIEPDEDDNEELNAFSNNSRGNSMVTNNEFFNSSNLKVPSKDVKVVNGVGYIKSDRNFSQANSILIENGDIRSRPVSSVTSTRQSTRLVNGMKVFPSTYKMGLPDGESNMRIEVRSRDLKQIYRKDYLFRSGSQNFDKVYVVMEGNIASLSKMQITPLKLQLNLLETTTYLSQGIANGNYSSLKLIEIDLNQLKSNKPLLDLNEIRENFDGSMFECELRLKDHPILRKLVFNEEDYRHRGNRLYSFKTCTIKRIFSLQLLIEWGINGIRKQSEVNIDPVQIFCQVREHVEAEALPRYVPPPTYTEMAS.

Residue lysine 118 forms a Glycyl lysine isopeptide (Lys-Gly) (interchain with G-Cter in ubiquitin) linkage.

The protein belongs to the ART10 family. As to quaternary structure, interacts with RSP5. Ubiquitinated by RSP5.

The protein resides in the cytoplasm. In terms of biological role, may regulate endocytosis by recruiting RSP5 ubiquitin ligase activity to specific plasma membrane proteins in response to extracellular stimuli. The protein is Arrestin-related trafficking adapter 10 (ART10) of Saccharomyces cerevisiae (strain YJM789) (Baker's yeast).